The following is a 223-amino-acid chain: UPF0502 protein Shew185_1758 (223 aa).

Belongs to the UPF0502 family.

This chain is UPF0502 protein Shew185_1758, found in Shewanella baltica (strain OS185).